A 239-amino-acid chain; its full sequence is 2-C-methyl-D-erythritol 4-phosphate cytidylyltransferase (239 aa).

This sequence belongs to the IspD/TarI cytidylyltransferase family. IspD subfamily.

The enzyme catalyses 2-C-methyl-D-erythritol 4-phosphate + CTP + H(+) = 4-CDP-2-C-methyl-D-erythritol + diphosphate. It functions in the pathway isoprenoid biosynthesis; isopentenyl diphosphate biosynthesis via DXP pathway; isopentenyl diphosphate from 1-deoxy-D-xylulose 5-phosphate: step 2/6. In terms of biological role, catalyzes the formation of 4-diphosphocytidyl-2-C-methyl-D-erythritol from CTP and 2-C-methyl-D-erythritol 4-phosphate (MEP). The sequence is that of 2-C-methyl-D-erythritol 4-phosphate cytidylyltransferase from Acinetobacter baylyi (strain ATCC 33305 / BD413 / ADP1).